The chain runs to 594 residues: UvrABC system protein C (594 aa).

Positions 14-91 (DQPGCYLMKD…IKKHDPKYNI (78 aa)) constitute a GIY-YIG domain. The region spanning 196–231 (KEVRSELETKMYEASEKLEFERAKELRDQIAHIDAI) is the UVR domain.

It belongs to the UvrC family. As to quaternary structure, interacts with UvrB in an incision complex.

Its subcellular location is the cytoplasm. The UvrABC repair system catalyzes the recognition and processing of DNA lesions. UvrC both incises the 5' and 3' sides of the lesion. The N-terminal half is responsible for the 3' incision and the C-terminal half is responsible for the 5' incision. This chain is UvrABC system protein C, found in Bacillus cereus (strain AH187).